The primary structure comprises 196 residues: MEFVVKETDGDTLYKLVLGLVVPRPIGWVSTISKDGILNIAPFSFFNVVNDEPPVLMISVSNRDDNTLKDTVKNVLDTKEFVVNMVSEEVFEKMLITGEEFPPEVNEFEKAGLTPETSKFVKAPRIKEAKVSFECKLYKYVPVYDMHVIFGEALLIKVEDTILDENLNVNYEKYRPIGRLGGKYYVKAFGECKLKV.

This sequence belongs to the flavoredoxin family. FMN is required as a cofactor.

This is an uncharacterized protein from Aquifex aeolicus (strain VF5).